We begin with the raw amino-acid sequence, 571 residues long: Putative fatty-acid--CoA ligase fadD11 (571 aa).

Over residues 1-19 the composition is skewed to low complexity; it reads MARLRGAGAAGRCRPGRFG. 2 disordered regions span residues 1 to 35 and 67 to 91; these read MARL…EPDR and RQRG…RCAH. The span at 78 to 91 shows a compositional bias: basic residues; the sequence is ATVRRSRSRQRCAH. Helical transmembrane passes span 314-334 and 431-451; these read TLAF…MSEL and ANIE…MAIG.

This sequence belongs to the ATP-dependent AMP-binding enzyme family.

Its subcellular location is the cell membrane. This chain is Putative fatty-acid--CoA ligase fadD11 (fadD11), found in Mycobacterium tuberculosis (strain CDC 1551 / Oshkosh).